The primary structure comprises 147 residues: Peptide methionine sulfoxide reductase MsrB 2 (147 aa).

Positions 6 to 129 (TDEEVSKLTP…NSAALRFIPR (124 aa)) constitute a MsrB domain. Cysteine 118 (nucleophile) is an active-site residue.

The protein belongs to the MsrB Met sulfoxide reductase family.

It carries out the reaction L-methionyl-[protein] + [thioredoxin]-disulfide + H2O = L-methionyl-(R)-S-oxide-[protein] + [thioredoxin]-dithiol. This chain is Peptide methionine sulfoxide reductase MsrB 2 (msrB2), found in Rhizobium meliloti (strain 1021) (Ensifer meliloti).